We begin with the raw amino-acid sequence, 990 residues long: MATSCNIRVMCRFRPLNEREKALKENQTCVTFPDETQVIVSGQPFTFDRVFTPESTQKEVFESVKDTIHDVLLGYNGTLLAYGQTGSGKTFTMGSAAAESDFENVEQLGIIPRGNHLIFNTIAEESDGNAEFTIKCSYLEIYMENIQDLLNPKNNKQLKIRESKSQGIYVEGLTEEYVASEEDIMELIQVGESSRSVAKTNMNQRSSRSHSILIIAIEQKSSDGSKKRGKLNLVDLAGSEKVSKTGAEGIVLEQAKKINQSLSLLGNCIHALTDSKREHIPFRDSKLTRLLQDSLGGNTKTTLLVTASPHFNNVDETISTLKFGARAKSIKNNVKVNQEKSAAELQIIVNALTKELSILKVYSISLENLVNYFKSSSYQPGNPIPKELEPNKQNLLLLQQQSNSSSGGGGSGSSGGSSNGSLMMKPRSTTPTPPSINRPHSSASTHRHSIAITGTHSKEGSGGGLTSSISSSSISSMSSLSSSIDNDYNGSSLDDSNGSNGLFNPLAIVEMSIEMEKMKEDTQLLIEKFKDEISEITIQYQSTQEELNQCRQQLDQIKEQLEQQRSQFIKEQSLLKESERNATLDSTSKDLKIQSLISKIEDLRLLASQVIQYLERKRLSDDFDIGIFMGSQDGANGDSANMFSLISNSIDQGTYEDDVNIEDIIRYLSEEEVLTMQVKLQLQNKVHQLEQKIQQLVSDLNTTEINYNQSILQCQKFESENSLIKRKFKSMFSSSNNNNNNNNSPPSSPSSKLLIQSSNNNNNFDSNLNSSSLSSSLPSSNGIEQDQQVDHQVDHQVENDHLVNDEDNKLLDENSKLKENELKLLLEIKNLKLQSEKSNDETLKWKDELSIKSALYQNQILNLQNENQSLSNKLNVEKQQKQSSQSQQIEFATKLNDLIKSSEDDKELYRNEKNQMELEIASLKASLDEMDLKNKELQDQLISTQRLIGARRVVKIVRGGADSMKTALATKEVFGQFTLRKTENSKTLFQ.

The Kinesin motor domain occupies 6-330 (NIRVMCRFRP…LKFGARAKSI (325 aa)). Position 83–90 (83–90 (GQTGSGKT)) interacts with ATP. Disordered regions lie at residues 401-485 (QSNS…SSID) and 732-788 (FSSS…QDQQ). Positions 406–418 (SGGGGSGSSGGSS) are enriched in gly residues. Low complexity-rich tracts occupy residues 466–485 (TSSISSSSISSMSSLSSSID) and 733–781 (SSSN…PSSN). The stretch at 513 to 948 (IEMEKMKEDT…DQLISTQRLI (436 aa)) forms a coiled coil.

This sequence belongs to the TRAFAC class myosin-kinesin ATPase superfamily. Kinesin family. Kinesin subfamily. As to quaternary structure, interacts with actin.

Its subcellular location is the cytoplasm. It localises to the cytoskeleton. In terms of biological role, microtubule-associated force-producing protein that plays a role in organelle transport. Its motor activity is directed toward the microtubule's plus end. May connect microtubules to actin filaments. Associates with actin-based structures in cells and is likely involved in the organization of actin cytoskeletons in such structures. In Dictyostelium discoideum (Social amoeba), this protein is Kinesin-related protein 5 (kif5).